The sequence spans 190 residues: Small ribosomal subunit protein eS7 (190 aa).

Belongs to the eukaryotic ribosomal protein eS7 family.

The sequence is that of Small ribosomal subunit protein eS7 (RpS7) from Manduca sexta (Tobacco hawkmoth).